The sequence spans 90 residues: Acylphosphatase (90 aa).

One can recognise an Acylphosphatase-like domain in the interval 5 to 90 (CVKASVKGIV…WRHIDGFEIK (86 aa)). Catalysis depends on residues arginine 20 and asparagine 38.

This sequence belongs to the acylphosphatase family.

It catalyses the reaction an acyl phosphate + H2O = a carboxylate + phosphate + H(+). The chain is Acylphosphatase (acyP) from Photobacterium profundum (strain SS9).